We begin with the raw amino-acid sequence, 771 residues long: Protein lin-54 homolog (771 aa).

2 disordered regions span residues 21–44 (AMDE…SAQV) and 68–105 (TNAK…IPSL). Residues 72–92 (STTSSTTQLLLTPSSSSSTTT) show a composition bias toward low complexity. Phosphoserine occurs at positions 288, 292, and 308. The CRC domain occupies 544–657 (PRKPCNCTRS…KCMGCKNFEE (114 aa)). A DNA-binding region spans residues 546-559 (KPCNCTRSQCLKLY). Zn(2+) contacts are provided by cysteine 548, cysteine 550, cysteine 555, cysteine 560, cysteine 562, cysteine 569, cysteine 572, cysteine 574, and cysteine 577. The segment at 606-619 (IGKGKEGESDRRHS) is linker. Positions 622, 624, 629, 634, 636, 643, 647, 649, and 652 each coordinate Zn(2+). The tract at residues 622 to 635 (CNCKKSGCLKNYCE) is DNA-binding.

Belongs to the lin-54 family. Component of the DREAM complex.

The protein resides in the nucleus. Component of the DREAM complex, a multiprotein complex that can both act as a transcription activator or repressor depending on the context. Specifically recognizes the consensus motif 5'-TTYRAA-3' in target DNA. This chain is Protein lin-54 homolog (lin54), found in Danio rerio (Zebrafish).